A 141-amino-acid chain; its full sequence is Large ribosomal subunit protein uL11 (141 aa).

This sequence belongs to the universal ribosomal protein uL11 family. Part of the ribosomal stalk of the 50S ribosomal subunit. Interacts with L10 and the large rRNA to form the base of the stalk. L10 forms an elongated spine to which L12 dimers bind in a sequential fashion forming a multimeric L10(L12)X complex. Post-translationally, one or more lysine residues are methylated.

Functionally, forms part of the ribosomal stalk which helps the ribosome interact with GTP-bound translation factors. This is Large ribosomal subunit protein uL11 from Prochlorococcus marinus (strain MIT 9313).